The chain runs to 709 residues: Polyribonucleotide nucleotidyltransferase (709 aa).

Mg(2+) contacts are provided by aspartate 489 and aspartate 495. Positions 556–615 constitute a KH domain; the sequence is PKIDMIKIDVDKIKVVIGKGGETIDKIIAETGVKIDIDEEGNVSIFSSDQAAIDRTKDII. The S1 motif domain maps to 625–693; sequence GEVYHAKVVR…DKGRVDASMK (69 aa).

Belongs to the polyribonucleotide nucleotidyltransferase family. Mg(2+) is required as a cofactor.

Its subcellular location is the cytoplasm. The enzyme catalyses RNA(n+1) + phosphate = RNA(n) + a ribonucleoside 5'-diphosphate. Functionally, involved in mRNA degradation. Catalyzes the phosphorolysis of single-stranded polyribonucleotides processively in the 3'- to 5'-direction. The chain is Polyribonucleotide nucleotidyltransferase from Streptococcus agalactiae serotype III (strain NEM316).